A 900-amino-acid chain; its full sequence is Zinc finger protein 574 (900 aa).

C2H2-type zinc fingers lie at residues 16-38 (YVCSECNQLYGSLEEVLVHQNSH), 76-98 (YQCLECGQLLLSPSQLLEHQELH), and 126-148 (YECVDCKALFASQEMWLSHRQTH). The residue at position 164 (Ser-164) is a Phosphoserine. The segment at 213-235 (YKCSECSQLFQMPADFLEHQATH) adopts a C2H2-type 4 zinc-finger fold. Positions 244–254 (AEPATQQETQV) are enriched in low complexity. Residues 244-306 (AEPATQQETQ…RRNNSGESGG (63 aa)) form a disordered region. The segment covering 273 to 290 (HSYELRNELRNGEAIGRD) has biased composition (basic and acidic residues). Ser-301 is modified (phosphoserine). 10 consecutive C2H2-type zinc fingers follow at residues 312 to 334 (LFCSACDQLFLSPHQLQQHLRSH), 339 to 361 (FKCPLCSRVFPSPSSLDQHLGDH), 367 to 389 (FLCVDCGLAFGTEALLLAHRRAH), 395 to 416 (HSCPCGKTFVNLTKFLYHRRTH), 469 to 492 (YRCLLCSREFGKALQLTRHQRFVH), 498 to 520 (HKCSICGKMFKKKSHVRNHLRTH), 526 to 548 (FPCPDCSKPFNSPANLARHRLTH), 554 to 576 (YRCGDCGKAFTQSSTLRQHRLVH), 582 to 604 (YRCQECGVRFHRPYRLLMHRYHH), and 610 to 633 (YKCRECPRSFLLRRLLEVHQLVIH). The C2H2-type 15; degenerate zinc finger occupies 639–662 (YRCSSCGAAFPSSLRLREHRCAAA). The segment at 670–692 (FECGTCGKKVGSAARLQAHEAAH) adopts a C2H2-type 16 zinc-finger fold. Positions 690-741 (AAHAAAGPGEVLAKEPPAPRASRATRTPVAPSPTALSGTTSAAPAAPARRRG) are disordered. Ser-721 is subject to Phosphoserine. Low complexity predominate over residues 721 to 736 (SPTALSGTTSAAPAAP). At Thr-728 the chain carries Phosphothreonine. C2H2-type zinc fingers lie at residues 742 to 764 (PECSECKKLFSTETSLQVHRRIH), 770 to 792 (YPCPDCGKAFRQSTHLKDHRRLH), 798 to 820 (FACEVCGKAFAISMRLAEHRRIH), and 826 to 848 (YSCPDCGKSYRSFSNLWKHRKTH). Arg-836 carries the asymmetric dimethylarginine modification.

The protein belongs to the krueppel C2H2-type zinc-finger protein family.

Its subcellular location is the nucleus. Its function is as follows. May be involved in transcriptional regulation. This is Zinc finger protein 574 (Znf574) from Mus musculus (Mouse).